Reading from the N-terminus, the 354-residue chain is L-Lys-D/L-Arg epimerase (354 aa).

Substrate-binding positions include threonine 135 and 160-162 (KIK). Residues aspartate 190, glutamate 215, and aspartate 240 each contribute to the Mg(2+) site. Substrate contacts are provided by residues lysine 265, aspartate 295, and 318-320 (DLD).

This sequence belongs to the mandelate racemase/muconate lactonizing enzyme family. It depends on Mg(2+) as a cofactor.

Its function is as follows. Catalyzes the epimerization of L-Lys-L-Arg to L-Lys-D-Arg (in vitro). Catalyzes the epimerization of positively charged dipeptides, with a preference for substrates with a basic amino acid in the second position. Has epimerase activity with L-Lys-L-Lys, L-Arg-L-Arg, L-Val-L-Arg, L-Val-L-Lys and L-Ala-L-Arg (in vitro). The polypeptide is L-Lys-D/L-Arg epimerase (Desulforapulum autotrophicum (strain ATCC 43914 / DSM 3382 / VKM B-1955 / HRM2) (Desulfobacterium autotrophicum)).